The following is a 236-amino-acid chain: Ubiquinone biosynthesis O-methyltransferase (236 aa).

Positions 39, 59, 80, and 124 each coordinate S-adenosyl-L-methionine.

It belongs to the methyltransferase superfamily. UbiG/COQ3 family.

The catalysed reaction is a 3-demethylubiquinol + S-adenosyl-L-methionine = a ubiquinol + S-adenosyl-L-homocysteine + H(+). The enzyme catalyses a 3-(all-trans-polyprenyl)benzene-1,2-diol + S-adenosyl-L-methionine = a 2-methoxy-6-(all-trans-polyprenyl)phenol + S-adenosyl-L-homocysteine + H(+). Its pathway is cofactor biosynthesis; ubiquinone biosynthesis. Functionally, O-methyltransferase that catalyzes the 2 O-methylation steps in the ubiquinone biosynthetic pathway. The sequence is that of Ubiquinone biosynthesis O-methyltransferase from Shewanella putrefaciens (strain CN-32 / ATCC BAA-453).